The sequence spans 406 residues: Tryptophan 2,3-dioxygenase (406 aa).

Substrate contacts are provided by residues 72–76 (FIITH) and Arg-144. Residue His-328 participates in heme binding. Thr-342 lines the substrate pocket.

It belongs to the tryptophan 2,3-dioxygenase family. As to quaternary structure, homotetramer. Dimer of dimers. Requires heme as cofactor.

It carries out the reaction L-tryptophan + O2 = N-formyl-L-kynurenine. It functions in the pathway amino-acid degradation; L-tryptophan degradation via kynurenine pathway; L-kynurenine from L-tryptophan: step 1/2. Functionally, heme-dependent dioxygenase that catalyzes the oxidative cleavage of the L-tryptophan (L-Trp) pyrrole ring and converts L-tryptophan to N-formyl-L-kynurenine. Catalyzes the oxidative cleavage of the indole moiety. The sequence is that of Tryptophan 2,3-dioxygenase from Homo sapiens (Human).